We begin with the raw amino-acid sequence, 520 residues long: GMP synthase [glutamine-hydrolyzing] (520 aa).

Positions 12 to 205 (KIIVLDYGSQ…AIFICGARGD (194 aa)) constitute a Glutamine amidotransferase type-1 domain. The Nucleophile role is filled by Cys89. Active-site residues include His179 and Glu181. The GMPS ATP-PPase domain occupies 206 to 395 (WSMDNFIDMQ…LGMPENIVWR (190 aa)). ATP is bound at residue 233-239 (SGGVDSS).

In terms of assembly, homodimer.

It catalyses the reaction XMP + L-glutamine + ATP + H2O = GMP + L-glutamate + AMP + diphosphate + 2 H(+). It participates in purine metabolism; GMP biosynthesis; GMP from XMP (L-Gln route): step 1/1. In terms of biological role, catalyzes the synthesis of GMP from XMP. The chain is GMP synthase [glutamine-hydrolyzing] from Streptococcus uberis (strain ATCC BAA-854 / 0140J).